Here is an 831-residue protein sequence, read N- to C-terminus: MSQGWRGGSGGWRGGGGGNPYAGAWRGRPWRGRGQGGTWSRNNGRDPVCFAPPKPQLTQTTLDKYIPYKGWKLYFSEAYSDNSPFLEKVRAFEKFFKKQIELYDKDEIERKGSILVDYKELLQDEDLSAAIPLSSELKDMPEKVLECMGLAIHQVLTKDLETHAADLQQQEGLRTEEAPIVNVPFIHARVFNYDTLTSLKNLRASLYGKYVALRGTVVRVGNIKPLCTKMAFSCNMCGDIQCFPLPDGKYTVPTKCPVPECRGRSFTANRSSPLTVTVDWQTIKVQELMSDDQREAGRIPRTVECELIQDLVDSCVPGDMITVTGIVKVSNTRDGGFKNKNNKCMFLLYIEANSVSNSKGQKGKSTEDSGNHGASMDFSLKDLYAIQEIQSQENLFQLIVNSLCPTIYGHELVKAGLSLALFGGCQKYADDKNRIPIRGDPHILVVGDPGLGKSQMLQAVCNVAPRGVYVCGNTTTTSGLTVTLSRDTTTGDFGLEAGALVLGDQGICGIDEFDKMGNQHQALLEAMEQQSISLAKAGIVCSLPARTSIIAAANPVGGHYNKGKTVSENLKMGSALLSRFDLVFILVDTPNEDHDHLLSEHVMAMRSGAKEIQSVDITRINTQNSNTSILEVPSERPLGERLKRTGEHFDALPHQLLRKFVGYARQYVHPSLSPDAAQILQDFYLELRKQNQGIDSTPITTRQLESLIRLTEARARLELREKATKEDAEEVVQIMKYSLLGTFSDEFGKLDFQRSQHGSGMSNRSKAKKFVSALNRVAEQTYNNLFEFQQLRQIARELQIQVIDFEAFIGSLNDQGYLLKKGPRVFQLQTM.

Positions 1–20 (MSQGWRGGSGGWRGGGGGNP) are enriched in gly residues. The interval 1–53 (MSQGWRGGSGGWRGGGGGNPYAGAWRGRPWRGRGQGGTWSRNNGRDPVCFAPP) is disordered. Positions 395-602 (LFQLIVNSLC…DHDHLLSEHV (208 aa)) constitute an MCM domain. 447 to 454 (GDPGLGKS) lines the ATP pocket.

It belongs to the MCM family. As to quaternary structure, component of the MCM8-MCM9 complex, which forms a hexamer composed of mcm8 and mcm9.

It localises to the nucleus. It carries out the reaction ATP + H2O = ADP + phosphate + H(+). Functionally, component of the MCM8-MCM9 complex, a complex involved in homologous recombination repair following DNA interstrand cross-links and plays a key role during gametogenesis. The MCM8-MCM9 complex probably acts as a hexameric helicase required to process aberrant forks into homologous recombination substrates and to orchestrate homologous recombination with resection, fork stabilization and fork restart. In eggs, required for elongation during DNA replication by facilitating the recruitment of rpa2/rpa34 and stimulating the processivity of DNA polymerases at replication foci. Probably not required for DNA replication in other cells. The polypeptide is DNA helicase MCM8 (mcm8) (Xenopus laevis (African clawed frog)).